We begin with the raw amino-acid sequence, 466 residues long: MTVASVEQMFSGKIQVGSEVTVRGWVRTRRDSKAGLSFVSVSDGSCFAAIQVVTPAHLPNYETEVRKLTTGCAVIVIGTLAPSLGQGQQFEIQAQSIEVVGWVEDPETYPIQPKQHSLEFLREVAHLRPRTNLFGAVARIRHCLSQAVHRFFHENGYYWITTPIITTSDAEGAGQMFRVSTLDLVNLPRTETGGIDFSHDFFGKETFLTVSGQLNVEAYALALSKVYTFGPTFRAENSHTPRHLAEFWMIEPEIAFADLAEDARVAEQFLKFLFKTVLEERTDDLAFITERVEKTTISKLEGFIKSPFERIEYTDAIKLLERSGKKFDFPVEWGLDLQTEHERWLTEKHIGRPVVVTNYPEHIKAFYMRLNDDGKTVAAMDVLAPGIGEIIGGSQREERLEMLDIRMAQFGLDPTHYQWYRDFRRYGSVPHAGFGLGFERLMVYVCGLSNIRDAIPYPRAPSSAEF.

This sequence belongs to the class-II aminoacyl-tRNA synthetase family. In terms of assembly, homodimer.

The protein localises to the cytoplasm. It carries out the reaction tRNA(Asn) + L-asparagine + ATP = L-asparaginyl-tRNA(Asn) + AMP + diphosphate + H(+). The polypeptide is Asparagine--tRNA ligase (Xylella fastidiosa (strain 9a5c)).